A 377-amino-acid chain; its full sequence is Palmitoyltransferase PFA4 (377 aa).

The Cytoplasmic portion of the chain corresponds to 1-9; the sequence is MAIKLKNRW. A helical transmembrane segment spans residues 10–30; sequence LGVAIPAFLVALIGYGSHYFI. Topologically, residues 31-122 are lumenal; sequence LSNFLSWNEQ…NCVGHSNFPH (92 aa). One can recognise a DHHC domain in the interval 78–128; sequence NYCKKCRVYKPERAHHCKTCNQCVLAMDHHCPWTLNCVGHSNFPHFMRFLF. The S-palmitoyl cysteine intermediate role is filled by Cys108. Residues 123–143 traverse the membrane as a helical segment; the sequence is FMRFLFWVIFSTAYLLFLLIG. At 144–163 the chain is on the cytoplasmic side; the sequence is RIYLLWSIRHTAFHHRSTSE. The helical transmembrane segment at 164–184 threads the bilayer; it reads IIFICIMTPMDAFVLLTVSSL. At 185–377 the chain is on the lumenal side; that stretch reads LGRCIYNQCL…SDFGVDTELE (193 aa).

This sequence belongs to the DHHC palmitoyltransferase family. PFA4 subfamily.

It localises to the endoplasmic reticulum membrane. The catalysed reaction is L-cysteinyl-[protein] + hexadecanoyl-CoA = S-hexadecanoyl-L-cysteinyl-[protein] + CoA. Functionally, mediates the reversible addition of palmitate to target proteins, thereby regulating their membrane association and biological function. The sequence is that of Palmitoyltransferase PFA4 from Kluyveromyces lactis (strain ATCC 8585 / CBS 2359 / DSM 70799 / NBRC 1267 / NRRL Y-1140 / WM37) (Yeast).